The sequence spans 485 residues: Glutamyl-tRNA(Gln) amidotransferase subunit A (485 aa).

Catalysis depends on charge relay system residues lysine 74 and serine 149. Serine 173 (acyl-ester intermediate) is an active-site residue.

The protein belongs to the amidase family. GatA subfamily. As to quaternary structure, heterotrimer of A, B and C subunits.

The enzyme catalyses L-glutamyl-tRNA(Gln) + L-glutamine + ATP + H2O = L-glutaminyl-tRNA(Gln) + L-glutamate + ADP + phosphate + H(+). Functionally, allows the formation of correctly charged Gln-tRNA(Gln) through the transamidation of misacylated Glu-tRNA(Gln) in organisms which lack glutaminyl-tRNA synthetase. The reaction takes place in the presence of glutamine and ATP through an activated gamma-phospho-Glu-tRNA(Gln). The chain is Glutamyl-tRNA(Gln) amidotransferase subunit A from Janthinobacterium sp. (strain Marseille) (Minibacterium massiliensis).